The chain runs to 309 residues: Methionine synthase (309 aa).

Residues His-201, Cys-203, Glu-224, and Cys-285 each coordinate Zn(2+).

The protein belongs to the archaeal MetE family. Zn(2+) is required as a cofactor.

The protein operates within amino-acid biosynthesis; L-methionine biosynthesis via de novo pathway. Its activity is regulated as follows. Is activated by phosphates. Catalyzes the transfer of a methyl group to L-homocysteine resulting in methionine formation. Can use methylcobalamin and methylcobinamide as methyl donors, but methylcobalamin is not considered to be the physiological substrate. It was proposed that, in vivo, a so-far-unidentified enzyme catalyzes methyltransfer from 5-methyltetrahydromethanopterin (5-CH3-H4MPT) to a corrinoid protein, and that the MetE gene product catalyzes the further transfer to L-homocysteine. Is not active with L-cysteine, coenzyme M, coenzyme B, glutathione or dithiothreitol as substrate. The protein is Methionine synthase of Methanothermobacter marburgensis (strain ATCC BAA-927 / DSM 2133 / JCM 14651 / NBRC 100331 / OCM 82 / Marburg) (Methanobacterium thermoautotrophicum).